The following is a 748-amino-acid chain: Proton-associated sugar transporter A (748 aa).

A run of 6 helical transmembrane segments spans residues 93-113 (ILFGIEFSYAMETAYVTPVLL), 123-143 (SLVWFISPILGFLLQPLLGAW), 155-175 (RPFILVLAIGALLGLSLLLNG), 191-211 (WGLLLTVCGVVLMDFSADSAD), 233-253 (IHALLAGLGGGFGYVVGGIHW), and 268-288 (VIYLFTAVTLSVTTVLTLVSI). The segment at 294–339 (RPPSEKRAAMKSPSLPLPPSPPVLPEEGPGDSLPSHTATNFSSPIS) is disordered. A compositionally biased stretch (pro residues) spans 308–317 (LPLPPSPPVL). Phosphothreonine is present on threonine 497. 6 consecutive transmembrane segments (helical) span residues 533-553 (GWLSFEGMLLFYTDFMGEVVF), 573-593 (VTMGCWGMCIYAFSAAFYSAI), 600-620 (FLSVRTLYFIAYLAFGLGTGL), 627-647 (LYVVLSLCITYGILFSTLCTL), 685-705 (FLAQILVSLVLGPLTSAVGSA), and 708-728 (VMYFSSLVSFLGCLYSSLFVI).

This sequence belongs to the glycoside-pentoside-hexuronide (GPH) cation symporter transporter (TC 2.A.2) family. Expressed in adult heart, brain, muscle and kidney, with very strong expression in brain. Also expressed in fetal brain, kidney and lung.

It is found in the membrane. It catalyses the reaction D-galactose(in) + H(+)(in) = D-galactose(out) + H(+)(out). The catalysed reaction is D-glucose(out) + H(+)(out) = D-glucose(in) + H(+)(in). In terms of biological role, proton-associated glucose transporter in the brain. The sequence is that of Proton-associated sugar transporter A from Homo sapiens (Human).